A 40-amino-acid chain; its full sequence is Competence and sporulation stimulating factor (40 aa).

Residues 1–35 constitute a propeptide that is removed on maturation; sequence MKLKSKLFVICLAAAAIFTAAGVSANAEALDFHVT.

The protein belongs to the Phr family. In terms of assembly, interacts with RapC and inhibits its interaction with ComA. Post-translationally, secreted with a propeptide domain, which is cleaved in the cell wall by the secreted serine proteases subtilisin, Epr and Vpr to produce a mature signaling peptide. Contains a predicted signal peptide cleavage site in the N-terminal region, however the propeptide is probably subject to only one processing event, at the N-terminal end of the mature peptide.

The protein localises to the secreted. The protein resides in the cytoplasm. Its subcellular location is the host cell. In terms of biological role, signaling molecule that serves as a cell density signal for both genetic competence development and sporulation. Secreted during production, but the mature peptide acts intracellularly, indicating that it needs to be imported into the cell to function. At low concentrations, CSF stimulates expression of the genes controlled by ComA, a transcriptional factor that regulates the development of genetic competence. It includes the srfA operon, which encodes a small protein, ComS, required for competence development, and the surfactin biosynthetic enzymes. Acts by inhibiting RapC, which regulates the activity of ComA. At high concentrations, it inhibits expression of those same ComA-controlled genes, maybe by inhibiting activity of the kinase ComP. In addition, high concentrations of CSF can stimulate sporulation under some conditions. Also inhibits RapB activity, with lower efficiency, but does not act on RapA. Is probably involved in the quorum sensing control of sporulation. CSF is a species-specific signaling molecule that partially compensates for the lack of ComX-mediated communication between different strains of B.subtilis. B.subtilis is a well-characterized soil and water saprophyte, but it is also found in enteric flora of many species, including humans. In this environment, CSF can be transported into human intestinal epithelia via OCTN2, a host cell membrane transporter, and can induce cytoprotective heat shock proteins contributing to intestinal homeostasis. Its function is as follows. In addition, in non-domesticated swarming strains of B.subtilis, the residual propeptide exposed on the exterior of the cytoplasmic membrane may have an extracellular role in swarming. This function is probably not dependent on CSF. This chain is Competence and sporulation stimulating factor, found in Bacillus subtilis (strain 168).